Consider the following 37-residue polypeptide: Large ribosomal subunit protein bL36 (37 aa).

The protein belongs to the bacterial ribosomal protein bL36 family.

This chain is Large ribosomal subunit protein bL36, found in Laribacter hongkongensis (strain HLHK9).